Here is a 262-residue protein sequence, read N- to C-terminus: Hydroxyethylthiazole kinase (262 aa).

Position 40 (M40) interacts with substrate. ATP is bound by residues K116 and T162. Residue G189 coordinates substrate.

The protein belongs to the Thz kinase family. Mg(2+) serves as cofactor.

The catalysed reaction is 5-(2-hydroxyethyl)-4-methylthiazole + ATP = 4-methyl-5-(2-phosphooxyethyl)-thiazole + ADP + H(+). It functions in the pathway cofactor biosynthesis; thiamine diphosphate biosynthesis; 4-methyl-5-(2-phosphoethyl)-thiazole from 5-(2-hydroxyethyl)-4-methylthiazole: step 1/1. Functionally, catalyzes the phosphorylation of the hydroxyl group of 4-methyl-5-beta-hydroxyethylthiazole (THZ). The polypeptide is Hydroxyethylthiazole kinase (Clostridioides difficile (strain 630) (Peptoclostridium difficile)).